The chain runs to 338 residues: Anthranilate phosphoribosyltransferase (338 aa).

Residues G81, 84–85, T89, 91–94, 109–117, and A121 contribute to the 5-phospho-alpha-D-ribose 1-diphosphate site; these read GD, NIST, and KHGNRNLSS. Residue G81 coordinates anthranilate. S93 lines the Mg(2+) pocket. N112 is a binding site for anthranilate. R167 contacts anthranilate. Mg(2+) is bound by residues D226 and E227.

The protein belongs to the anthranilate phosphoribosyltransferase family. Homodimer. Mg(2+) serves as cofactor.

The enzyme catalyses N-(5-phospho-beta-D-ribosyl)anthranilate + diphosphate = 5-phospho-alpha-D-ribose 1-diphosphate + anthranilate. It participates in amino-acid biosynthesis; L-tryptophan biosynthesis; L-tryptophan from chorismate: step 2/5. Catalyzes the transfer of the phosphoribosyl group of 5-phosphorylribose-1-pyrophosphate (PRPP) to anthranilate to yield N-(5'-phosphoribosyl)-anthranilate (PRA). This is Anthranilate phosphoribosyltransferase from Cereibacter sphaeroides (strain KD131 / KCTC 12085) (Rhodobacter sphaeroides).